Reading from the N-terminus, the 128-residue chain is Gastrotropin (128 aa).

Residue Ala-2 is modified to N-acetylalanine.

Belongs to the calycin superfamily. Fatty-acid binding protein (FABP) family. In terms of tissue distribution, predominantly expressed in ileum; also expressed in ovary.

The protein resides in the cytoplasm. It is found in the membrane. Functionally, binds to bile acids and is involved in enterohepatic bile acid metabolism. Required for efficient apical to basolateral transport of conjugated bile acids in ileal enterocytes. Stimulates gastric acid and pepsinogen secretion. The sequence is that of Gastrotropin (Fabp6) from Rattus norvegicus (Rat).